The sequence spans 1966 residues: Dedicator of cytokinesis protein 4 (1966 aa).

Residues 6–67 enclose the SH3 domain; that stretch reads EHEKYGVVIA…PSSYVHLKNA (62 aa). Phosphotyrosine is present on Tyr-167. Thr-193 bears the Phosphothreonine mark. The C2 DOCK-type domain occupies 401-574; it reads RNDLYITIER…ESFCITSFLC (174 aa). The region spanning 1190-1596 is the DOCKER domain; that stretch reads KTELNKEEMY…LGIQEFSACM (407 aa). Phosphoserine occurs at positions 1599, 1607, 1614, 1618, 1620, and 1631. 2 disordered regions span residues 1648-1729 and 1742-1966; these read SQAS…IYPT and IGDG…VSQL. Residues 1672 to 1703 show a composition bias toward low complexity; that stretch reads PSPSTSSLSSTHSASPNVTSSAPSSARASPLL. At Ser-1769 the chain carries Phosphoserine. The SH3-binding signature appears at 1788 to 1794; that stretch reads PPVPPRP. Residues 1795–1809 are compositionally biased toward polar residues; that stretch reads TQTASPARHTTSVSP. Residues 1838-1863 show a composition bias toward low complexity; the sequence is SNSPVLSGSYSSGISSLSRCSTSETS. Residues 1864-1873 show a composition bias toward polar residues; the sequence is GFENQVNEQS. The segment covering 1941–1954 has biased composition (basic and acidic residues); sequence SHLENGARRTDPGP.

The protein belongs to the DOCK family. In terms of assembly, interacts with nucleotide-free Rap1; functions as a guanine nucleotide exchange factor (GEF) for Rap1. Interacts (via DOCKER domain) with RAC1; functions as a guanine nucleotide exchange factor (GEF) for RAC1. Interacts with the SH3 domain of CRK. Interacts with FASLG. Interacts with ELMO2 and EPHA2; mediates activation of RAC1 by EPHA2. Interacts with USH1C (via PDZ 1 domain). In terms of tissue distribution, widely expressed at low level. Highly expressed in skeletal muscle, prostate and ovary. May be specifically expressed in the brain and eye.

Its subcellular location is the cell membrane. It is found in the cell projection. It localises to the cytoplasm. The protein localises to the cytosol. In terms of biological role, functions as a guanine nucleotide exchange factor (GEF) that promotes the exchange of GDP to GTP, converting inactive GDP-bound small GTPases into their active GTP-bound form. Involved in regulation of adherens junction between cells. Plays a role in cell migration. Has a higher guanine nucleotide exchange factor activity compared to other isoforms. This Homo sapiens (Human) protein is Dedicator of cytokinesis protein 4 (DOCK4).